The following is a 637-amino-acid chain: MNNWSIDDARASYNVNYWSQGLYGISDEGEVTVSPDPNRPDCKIGLNELAKDMVKAGVALPVLVRFPQILHHRVNSLCQAFNQAIQKYKYEADYLLVYPIKVNQQQTVVEEILASQVEKEVPQLGLEAGSKPELLAVLAMAQKASSVIICNGYKDKEYIRLALIGEKLGHKVYIVLEKMSELKVVLEQAKELGVTPRLGLRVRLAFQGKGKWQASGGEKSKFGLSAAQVLKVIELLQHEEMLDSLELLHFHLGSQIANIRDIRQGVSEAGRFYCELMKLGAQVKCFDVGGGLAVDYDGTRSQSNNSMNYGLTEYANNIVSVLTDMCKEYEQPMPRIISESGRYLTAHHAVLLTDVIGTESYKPETILPPSEDAPLLLQNMWQSWTEVSGKADQRALIEIFHDCQSDLTEVHSLFALGQLSLADRAWAEQINLRVCHELQGSMSSKYRYHRPIIDELNEKLADKFFVNFSLFQSLPDAWGIDQVFPVMPLSGLDKAPERRAVMLDITCDSDGIVDQYVDGQGIETTLPVPAWTQESPYLIGFFLVGAYQEILGDMHNLFGDTNSAVVRVDENGRRNIDSVLEGDTVADVLRYVNLEAVSFMRTYEELVNKHIVADERSNILEELQLGLKGYTYLEDFS.

Position 101 is an N6-(pyridoxal phosphate)lysine (Lys101). 286-296 (FDVGGGLAVDY) contributes to the substrate binding site.

It belongs to the Orn/Lys/Arg decarboxylase class-II family. SpeA subfamily. The cofactor is Mg(2+). Pyridoxal 5'-phosphate serves as cofactor.

The enzyme catalyses L-arginine + H(+) = agmatine + CO2. It functions in the pathway amine and polyamine biosynthesis; agmatine biosynthesis; agmatine from L-arginine: step 1/1. Its function is as follows. Catalyzes the biosynthesis of agmatine from arginine. This chain is Biosynthetic arginine decarboxylase, found in Shewanella piezotolerans (strain WP3 / JCM 13877).